We begin with the raw amino-acid sequence, 508 residues long: GMP synthase [glutamine-hydrolyzing] (508 aa).

Residues 1–189 enclose the Glutamine amidotransferase type-1 domain; it reads MILVLDFGSQ…ALLVCGCEKT (189 aa). The active-site Nucleophile is the C78. Catalysis depends on residues H163 and E165. In terms of domain architecture, GMPS ATP-PPase spans 190 to 383; the sequence is WGMQHFAQRE…LGVSQDFLMR (194 aa). 217 to 223 is an ATP binding site; the sequence is SGGVDST.

In terms of assembly, homodimer.

The enzyme catalyses XMP + L-glutamine + ATP + H2O = GMP + L-glutamate + AMP + diphosphate + 2 H(+). It participates in purine metabolism; GMP biosynthesis; GMP from XMP (L-Gln route): step 1/1. Functionally, catalyzes the synthesis of GMP from XMP. This is GMP synthase [glutamine-hydrolyzing] (guaA) from Helicobacter pylori (strain ATCC 700392 / 26695) (Campylobacter pylori).